A 98-amino-acid chain; its full sequence is UPF0473 protein LSL_1108 (98 aa).

The protein belongs to the UPF0473 family.

In Ligilactobacillus salivarius (strain UCC118) (Lactobacillus salivarius), this protein is UPF0473 protein LSL_1108.